The sequence spans 416 residues: 3-oxoacyl-[acyl-carrier-protein] synthase 1 (416 aa).

One can recognise a Ketosynthase family 3 (KS3) domain in the interval 11–415; sequence FPSVVVTAVT…GHNVALAFGR (405 aa). Active-site for beta-ketoacyl synthase activity residues include C171, H311, and H345. H311 and H345 together coordinate substrate.

It belongs to the thiolase-like superfamily. Beta-ketoacyl-ACP synthases family.

It is found in the cytoplasm. The catalysed reaction is an ultra-long-chain mono-unsaturated fatty acyl-[ACP] + malonyl-[ACP] + H(+) = a 3-oxo-ultra-long-chain mono-unsaturated fatty acyl-[ACP] + holo-[ACP] + CO2. It functions in the pathway lipid metabolism; mycolic acid biosynthesis. Part of the mycobacterial fatty acid elongation system FAS-II, which is involved in mycolic acid biosynthesis. Catalyzes the elongation of long chain acyl-ACP substrates by the addition of two carbons from malonyl-ACP to an acyl acceptor. Involved in the initial extension of the mycolate chain and forms monounsaturated fatty acids that averaged 40 carbons in length. This Mycobacterium leprae (strain TN) protein is 3-oxoacyl-[acyl-carrier-protein] synthase 1 (kasA).